Reading from the N-terminus, the 376-residue chain is Ribosomal RNA large subunit methyltransferase G (376 aa).

Belongs to the methyltransferase superfamily. RlmG family.

It localises to the cytoplasm. The enzyme catalyses guanosine(1835) in 23S rRNA + S-adenosyl-L-methionine = N(2)-methylguanosine(1835) in 23S rRNA + S-adenosyl-L-homocysteine + H(+). Functionally, specifically methylates the guanine in position 1835 (m2G1835) of 23S rRNA. The chain is Ribosomal RNA large subunit methyltransferase G from Vibrio vulnificus (strain CMCP6).